The following is a 501-amino-acid chain: Solute carrier family 2, facilitated glucose transporter member 5 (501 aa).

Methionine 1 carries the N-acetylmethionine modification. The Cytoplasmic segment spans residues 1 to 18; the sequence is MEQQDQSMKEGRLTLVLA. A helical membrane pass occupies residues 19-39; that stretch reads LATLIAAFGSSFQYGYNVAAV. Tyrosine 32 lines the D-fructose pocket. Residues 40–68 lie on the Extracellular side of the membrane; that stretch reads NSPALLMQQFYNETYYGRTGEFMEDFPLT. Asparagine 51 is a glycosylation site (N-linked (GlcNAc...) asparagine). Residues 69 to 91 form a helical membrane-spanning segment; sequence LLWSVTVSMFPFGGFIGSLLVGP. Over 92–98 the chain is Cytoplasmic; it reads LVNKFGR. The helical transmembrane segment at 99-119 threads the bilayer; sequence KGALLFNNIFSIVPAILMGCS. Topologically, residues 120 to 126 are extracellular; sequence RVATSFE. A helical transmembrane segment spans residues 127–149; that stretch reads LIIISRLLVGICAGVSSNVVPMY. At 150–161 the chain is on the cytoplasmic side; sequence LGELAPKNLRGA. A helical transmembrane segment spans residues 162–182; that stretch reads LGVVPQLFITVGILVAQIFGL. Glutamine 167 serves as a coordination point for D-fructose. At 183–192 the chain is on the extracellular side; it reads RNLLANVDGW. The helical transmembrane segment at 193-213 threads the bilayer; the sequence is PILLGLTGVPAALQLLLLPFF. The Cytoplasmic portion of the chain corresponds to 214–277; that stretch reads PESPRYLLIQ…LFRMRSLRWQ (64 aa). Residues 278-298 traverse the membrane as a helical segment; sequence LLSIIVLMGGQQLSGVNAIYY. D-fructose is bound by residues glutamine 288 and 296–298; that span reads IYY. Residues 299 to 313 are Extracellular-facing; that stretch reads YADQIYLSAGVPEEH. The chain crosses the membrane as a helical span at residues 314 to 334; it reads VQYVTAGTGAVNVVMTFCAVF. Topologically, residues 335–342 are cytoplasmic; it reads VVELLGRR. A helical transmembrane segment spans residues 343-363; the sequence is LLLLLGFSICLIACCVLTAAL. Topologically, residues 364-371 are extracellular; the sequence is ALQDTVSW. A helical membrane pass occupies residues 372–394; sequence MPYISIVCVISYVIGHALGPSPI. Histidine 387 lines the D-fructose pocket. Residues 395–412 lie on the Cytoplasmic side of the membrane; that stretch reads PALLITEIFLQSSRPSAF. The chain crosses the membrane as a helical span at residues 413 to 433; it reads MVGGSVHWLSNFTVGLIFPFI. 419–420 is a D-fructose binding site; sequence HW. At 434-439 the chain is on the extracellular side; the sequence is QEGLGP. Residues 440–460 form a helical membrane-spanning segment; it reads YSFIVFAVICLLTTIYIFLIV. Residues 461-501 are Cytoplasmic-facing; sequence PETKAKTFIEINQIFTKMNKVSEVYPEKEELKELPPVTSEQ.

Detected in skeletal muscle, and in jejunum brush border membrane and basolateral membrane (at protein level). Expressed in small intestine, and at much lower levels in kidney, skeletal muscle, and adipose tissue.

The protein resides in the apical cell membrane. It localises to the cell membrane. Its subcellular location is the sarcolemma. The catalysed reaction is D-fructose(out) = D-fructose(in). With respect to regulation, the uptake of 2-deoxyglucose is inhibited by cytochalasin B. Fructose transport is inhibited by the flavonoids epigallocatechin gallate and apigenin but not quercetin. Functions as a fructose transporter that has only low activity with other monosaccharides. Can mediate the uptake of 2-deoxyglucose, but with low efficiency. Essential for fructose uptake in the small intestine. Plays a role in the regulation of salt uptake and blood pressure in response to dietary fructose. Required for the development of high blood pressure in response to high dietary fructose intake. This chain is Solute carrier family 2, facilitated glucose transporter member 5, found in Homo sapiens (Human).